A 639-amino-acid chain; its full sequence is Cystathionine gamma-synthase (639 aa).

N6-(pyridoxal phosphate)lysine is present on Lys443.

The protein belongs to the trans-sulfuration enzymes family. MET7 subfamily. It depends on pyridoxal 5'-phosphate as a cofactor.

It localises to the cytoplasm. It is found in the nucleus. The enzyme catalyses O-succinyl-L-homoserine + L-cysteine = L,L-cystathionine + succinate + H(+). It participates in amino-acid biosynthesis; L-methionine biosynthesis via de novo pathway; L-cystathionine from O-succinyl-L-homoserine: step 1/1. Functionally, catalyzes the formation of L-cystathionine from O-succinyl-L-homoserine (OSHS) and L-cysteine, via a gamma-replacement reaction. In the absence of thiol, catalyzes gamma-elimination to form 2-oxobutanoate, succinate and ammonia. The sequence is that of Cystathionine gamma-synthase from Saccharomyces cerevisiae (strain ATCC 204508 / S288c) (Baker's yeast).